A 314-amino-acid chain; its full sequence is Olfactory receptor 5B3 (314 aa).

The Extracellular portion of the chain corresponds to 1–23 (MENKTEVTQFILLGLTNDSELQV). N-linked (GlcNAc...) asparagine glycans are attached at residues N3 and N17. Residues 24–44 (PLFITFPFIYIITLVGNLGII) form a helical membrane-spanning segment. The Cytoplasmic portion of the chain corresponds to 45–52 (VLIFWDSC). The helical transmembrane segment at 53-73 (LHNPMYFFLSNLSLVDFCYSS) threads the bilayer. Residues 74–97 (AVTPIVMAGFLIEDKVISYNACAA) are Extracellular-facing. C95 and C187 are disulfide-bonded. A helical membrane pass occupies residues 98 to 118 (QMYIFVAFATVENYLLASMAY). The Cytoplasmic segment spans residues 119 to 131 (DRYAAVCKPLHYT). Residues 132 to 152 (TTMTTTVCARLAIGSYLCGFL) form a helical membrane-spanning segment. N-linked (GlcNAc...) asparagine glycosylation occurs at N153. The Extracellular segment spans residues 153–194 (NASIHTGDTFSLSFCKSNEVHHFFCDIPAVMVLSCSDRHISE). A helical membrane pass occupies residues 195-215 (LVLIYVVSFNIFIALLVILIS). Over 216–235 (YTFIFITILKMHSASVYQKP) the chain is Cytoplasmic. Residues 236–256 (LSTCASHFIAVGIFYGTIIFM) traverse the membrane as a helical segment. Topologically, residues 257-269 (YLQPSSSHSMDTD) are extracellular. The helical transmembrane segment at 270-290 (KMAPVFYTMVIPMLNPLVYSL) threads the bilayer. The Cytoplasmic portion of the chain corresponds to 291–314 (RNKEVKSAFKKVVEKAKLSVGWSV).

It belongs to the G-protein coupled receptor 1 family.

The protein localises to the cell membrane. Its function is as follows. Odorant receptor. This is Olfactory receptor 5B3 (OR5B3) from Homo sapiens (Human).